An 886-amino-acid polypeptide reads, in one-letter code: Isoleucine--tRNA ligase (886 aa).

A 'HIGH' region motif is present at residues 60–70 (PYANGDIHIGH). L-isoleucyl-5'-AMP is bound at residue E546. The 'KMSKS' region motif lies at 587–591 (KMSKS). K590 provides a ligand contact to ATP. Zn(2+) contacts are provided by C856, C859, C870, and C873.

This sequence belongs to the class-I aminoacyl-tRNA synthetase family. IleS type 1 subfamily. In terms of assembly, monomer. Zn(2+) serves as cofactor.

The protein localises to the cytoplasm. The enzyme catalyses tRNA(Ile) + L-isoleucine + ATP = L-isoleucyl-tRNA(Ile) + AMP + diphosphate. Its function is as follows. Catalyzes the attachment of isoleucine to tRNA(Ile). As IleRS can inadvertently accommodate and process structurally similar amino acids such as valine, to avoid such errors it has two additional distinct tRNA(Ile)-dependent editing activities. One activity is designated as 'pretransfer' editing and involves the hydrolysis of activated Val-AMP. The other activity is designated 'posttransfer' editing and involves deacylation of mischarged Val-tRNA(Ile). This Mesomycoplasma hyopneumoniae (strain 7448) (Mycoplasma hyopneumoniae) protein is Isoleucine--tRNA ligase.